The sequence spans 940 residues: Isoleucine--tRNA ligase (940 aa).

The short motif at 58-68 (PYANGDIHIGH) is the 'HIGH' region element. Position 564 (E564) interacts with L-isoleucyl-5'-AMP. Residues 605–609 (KMSKS) carry the 'KMSKS' region motif. An ATP-binding site is contributed by K608. Positions 903, 906, 923, and 926 each coordinate Zn(2+).

This sequence belongs to the class-I aminoacyl-tRNA synthetase family. IleS type 1 subfamily. Monomer. The cofactor is Zn(2+).

It localises to the cytoplasm. The catalysed reaction is tRNA(Ile) + L-isoleucine + ATP = L-isoleucyl-tRNA(Ile) + AMP + diphosphate. Its function is as follows. Catalyzes the attachment of isoleucine to tRNA(Ile). As IleRS can inadvertently accommodate and process structurally similar amino acids such as valine, to avoid such errors it has two additional distinct tRNA(Ile)-dependent editing activities. One activity is designated as 'pretransfer' editing and involves the hydrolysis of activated Val-AMP. The other activity is designated 'posttransfer' editing and involves deacylation of mischarged Val-tRNA(Ile). The protein is Isoleucine--tRNA ligase of Shewanella piezotolerans (strain WP3 / JCM 13877).